Consider the following 314-residue polypeptide: Versiconal hemiacetal acetate esterase (314 aa).

The Involved in the stabilization of the negatively charged intermediate by the formation of the oxyanion hole signature appears at 85–87 (HGG). Catalysis depends on residues Ser154, Asp255, and His285.

It belongs to the 'GDXG' lipolytic enzyme family.

The catalysed reaction is (2S,3S)-versiconal hemiacetal acetate + H2O = (2S-3S)-versiconal hemiacetal + acetate + H(+). It catalyses the reaction (3S)-versiconol acetate + H2O = (S)-versiconol + acetate + H(+). Its pathway is mycotoxin biosynthesis; aflatoxin biosynthesis. Functionally, versiconal hemiacetal acetate esterase; part of the gene cluster that mediates the biosynthesis of aflatoxins, a group of polyketide-derived furanocoumarins, and part of the most toxic and carcinogenic compounds among the known mycotoxins. The four major aflatoxins produced by A.parasiticus are aflatoxin B1 (AFB1), aflatoxin B2 (AFB2), aflatoxin G1 (AFG1) and aflatoxin G2 (AFG2). Within the aflatoxin pathway, the versiconal hemiacetal acetate esterase aflJ converts versiconal hemiacetal acetate (VHA) into versiconal (VAL). The biosynthesis of aflatoxins begins with the norsolorinic acid synthase aflC that combines a hexanoyl starter unit produced by the fatty acid synthase aflA/aflB and 7 malonyl-CoA extender units to synthesize the precursor NOR. The second step is the conversion of NOR to averantin and requires the norsolorinic acid ketoreductase aflD, which catalyzes the dehydration of norsolorinic acid to form (1'S)-averantin. The norsolorinic acid reductases aflE and aflF may also play a role in the conversion of NOR to AVN. The cytochrome P450 monooxygenase aflG then catalyzes the hydroxylation of AVN to 5'hydroxyaverantin (HAVN). The next step is performed by the 5'-hydroxyaverantin dehydrogenase aflH that transforms HAVN to 5'-oxoaverantin (OAVN) which is further converted to averufin (AVF) by aflK that plays a dual role in the pathway, as a 5'-oxoaverantin cyclase that mediates conversion of 5'-oxoaverantin, as well as a versicolorin B synthase in a later step in the pathway. The averufin oxidase aflI catalyzes the conversion of AVF to versiconal hemiacetal acetate (VHA). VHA is then the substrate for the versiconal hemiacetal acetate esterase aflJ to yield versiconal (VAL). Versicolorin B synthase aflK then converts VAL to versicolorin B (VERB) by closing the bisfuran ring of aflatoxin which is required for DNA-binding, thus giving to aflatoxin its activity as a mutagen. Then, the activity of the versicolorin B desaturase aflL leads to versicolorin A (VERA). A branch point starts from VERB since it can also be converted to dihydrodemethylsterigmatocystin (DMDHST), probably also by aflL, VERA being a precursor for aflatoxins B1 and G1, and DMDHST for aflatoxins B2 and G2. Next, the versicolorin reductase aflM and the cytochrome P450 monooxygenase aflN are involved in conversion of VERA to demethylsterigmatocystin (DMST). AflX and aflY seem also involved in this step, through probable aflX-mediated epoxide ring-opening step following versicolorin A oxidation and aflY-mediated Baeyer-Villiger oxidation required for the formation of the xanthone ring. The methyltransferase aflO then leads to the modification of DMST to sterigmatocystin (ST), and of DMDHST to dihydrosterigmatocystin (DHST). Both ST and DHST are then substrates of the O-methyltransferase aflP to yield O-methylsterigmatocystin (OMST) and dihydro-O-methylsterigmatocystin (DHOMST), respectively. Finally OMST is converted to aflatoxins B1 and G1, and DHOMST to aflatoxins B2 and G2, via the action of several enzymes including O-methylsterigmatocystin oxidoreductase aflQ, the cytochrome P450 monooxygenase aflU, but also the NADH-dependent flavin oxidoreductase nadA which is specifically required for the synthesis of AFG1. The chain is Versiconal hemiacetal acetate esterase from Aspergillus parasiticus (strain ATCC 56775 / NRRL 5862 / SRRC 143 / SU-1).